A 371-amino-acid chain; its full sequence is 4-hydroxybenzoate polyprenyltransferase, mitochondrial (371 aa).

A mitochondrion-targeting transit peptide spans 1–34 (MLGSRAAGFARGLRAVALAWLPGWRGRSFALARA). The Mitochondrial matrix segment spans residues 35–83 (AGAPHGGDLQPPACPEPRGRQLSLSAAAVVDSAPRPLQPYLRLMRLDKP). The helical transmembrane segment at 84–104 (IGTWLLYLPCTWSIGLAAEPG) threads the bilayer. Over 105–108 (CFPD) the chain is Mitochondrial intermembrane. Residues 109–129 (WYMLSLFGTGAILMRGAGCTI) form a helical membrane-spanning segment. Residues 130–148 (NDMWDQDYDKKVTRTANRP) are Mitochondrial matrix-facing. The chain crosses the membrane as a helical span at residues 149 to 169 (IAAGDISTFQSFVFLGGQLTL). Residues 170 to 172 (ALG) lie on the Mitochondrial intermembrane side of the membrane. A helical membrane pass occupies residues 173–193 (VLLCLNYYSIALGAGSLLLVI). Topologically, residues 194-203 (TYPLMKRISY) are mitochondrial matrix. A helical transmembrane segment spans residues 204 to 224 (WPQLALGLTFNWGALLGWSAI). Over 225 to 231 (KGSCDPS) the chain is Mitochondrial intermembrane. The chain crosses the membrane as a helical span at residues 232–252 (VCLPLYFSGVMWTLIYDTIYA). At 253 to 277 (HQDKRDDVLIGLKSTALRFGENTKP) the chain is on the mitochondrial matrix side. A helical membrane pass occupies residues 278 to 298 (WLSGFSVAMLGALSLVGVNSG). Residues 299–300 (QT) are Mitochondrial intermembrane-facing. The helical transmembrane segment at 301 to 321 (APYYAALGAVGAHLTHQIYTL) threads the bilayer. Residues 322-332 (DIHRPEDCWNK) lie on the Mitochondrial matrix side of the membrane. The helical transmembrane segment at 333–353 (FISNRTLGLIVFLGIVLGNLW) threads the bilayer. Topologically, residues 354 to 371 (KEKKTDKTKKGIENKIEN) are mitochondrial intermembrane.

Belongs to the UbiA prenyltransferase family. Mg(2+) serves as cofactor. As to expression, widely expressed. Present in all of the tissues tested. Expressed at higher level in skeletal muscle, adrenal glands and the heart.

It is found in the mitochondrion inner membrane. It carries out the reaction an all-trans-polyprenyl diphosphate + 4-hydroxybenzoate = a 4-hydroxy-3-(all-trans-polyprenyl)benzoate + diphosphate. The enzyme catalyses all-trans-decaprenyl diphosphate + 4-hydroxybenzoate = 4-hydroxy-3-(all-trans-decaprenyl)benzoate + diphosphate. The catalysed reaction is all-trans-nonaprenyl diphosphate + 4-hydroxybenzoate = 4-hydroxy-3-(all-trans-nonaprenyl)benzoate + diphosphate. Its pathway is cofactor biosynthesis; ubiquinone biosynthesis. Functionally, mediates the second step in the final reaction sequence of coenzyme Q (CoQ) biosynthesis. Catalyzes the prenylation of para-hydroxybenzoate (PHB) with an all-trans polyprenyl donor (such as all-trans-decaprenyl diphosphate). The length of the polyprenyl side chain varies depending on the species, in humans, the side chain is comprised of 10 isoprenyls (decaprenyl) producing CoQ10 (also known as ubiquinone), whereas rodents predominantly generate CoQ9. However, this specificity is not complete, human tissues have low amounts of CoQ9 and rodent organs contain some CoQ10. Plays a central role in the biosynthesis of CoQ10. CoQ10 is a vital molecule that transports electrons from mitochondrial respiratory chain complexes. CoQs also function as cofactors for uncoupling protein and play a role as regulators of the extracellularly-induced ceramide-dependent apoptotic pathway. Regulates mitochondrial permeability transition pore (mPTP) opening and ROS production (pivotal events in cell death) in a tissue specific manner. The sequence is that of 4-hydroxybenzoate polyprenyltransferase, mitochondrial from Homo sapiens (Human).